Consider the following 322-residue polypeptide: uncharacterized protein (322 aa).

The disordered stretch occupies residues 277–322 (LVTYGGKDGPSDNEDGPSDDEDGPSDDEEGLSKDGVSEYYQSDLDD). Over residues 287-305 (SDNEDGPSDDEDGPSDDEE) the composition is skewed to acidic residues.

This is an uncharacterized protein from Frog virus 3 (isolate Goorha) (FV-3).